The chain runs to 283 residues: Pantothenate synthetase (283 aa).

Residue Met30–His37 coordinates ATP. The active-site Proton donor is His37. Gln61 is a (R)-pantoate binding site. Gln61 contributes to the beta-alanine binding site. ATP is bound at residue Gly147–Asp150. Gln153 serves as a coordination point for (R)-pantoate. ATP contacts are provided by residues Val176 and Met184 to Arg187.

Belongs to the pantothenate synthetase family. Homodimer.

It is found in the cytoplasm. It catalyses the reaction (R)-pantoate + beta-alanine + ATP = (R)-pantothenate + AMP + diphosphate + H(+). It participates in cofactor biosynthesis; (R)-pantothenate biosynthesis; (R)-pantothenate from (R)-pantoate and beta-alanine: step 1/1. In terms of biological role, catalyzes the condensation of pantoate with beta-alanine in an ATP-dependent reaction via a pantoyl-adenylate intermediate. This chain is Pantothenate synthetase, found in Nitratidesulfovibrio vulgaris (strain ATCC 29579 / DSM 644 / CCUG 34227 / NCIMB 8303 / VKM B-1760 / Hildenborough) (Desulfovibrio vulgaris).